Consider the following 969-residue polypeptide: RNA polymerase-associated protein RapA (969 aa).

One can recognise a Helicase ATP-binding domain in the interval 164 to 334 (EVGRRHAPRV…FARLRLLDSD (171 aa)). 177–184 (DEVGLGKT) contributes to the ATP binding site. The short motif at 280–283 (DEAH) is the DEAH box element. A Helicase C-terminal domain is found at 492–668 (RVNWLLEKLK…GSNEALNDVI (177 aa)).

Belongs to the SNF2/RAD54 helicase family. RapA subfamily. Interacts with the RNAP. Has a higher affinity for the core RNAP than for the holoenzyme. Its ATPase activity is stimulated by binding to RNAP.

Functionally, transcription regulator that activates transcription by stimulating RNA polymerase (RNAP) recycling in case of stress conditions such as supercoiled DNA or high salt concentrations. Probably acts by releasing the RNAP, when it is trapped or immobilized on tightly supercoiled DNA. Does not activate transcription on linear DNA. Probably not involved in DNA repair. In Vibrio vulnificus (strain YJ016), this protein is RNA polymerase-associated protein RapA.